Reading from the N-terminus, the 324-residue chain is MSEENVLIGVIGGSGLYQLDNLTVVKTVNPETPWGFPSSPITIAALPSGTKVAFLARHGIGHVIPPSSVPSTANIAALKSLGVSAILSFSAVGSLREEISPGSFALPSQIIDRTKGIRDSSFFNGTSIVAHAMFGDPFSNKLIRWLEPRVRKALEKEGKGKLLFTDKTIVCMEGPQFSTRAESVMYRQWGGDLINMSVLPEAKLAREAELSYALIAMATDYDSWRPHSDAVTAHDVVQTLHDNGASAKLVLSTILDDLHTTINTHHRALTNGNSQDLEAIREEEALLQERGSMKFSIMPASPQQKAEDRKKLAFILPEHFKDAA.

Phosphate contacts are provided by residues serine 14, 57–58, and 90–91; these read RH and SA. Methionine 196 provides a ligand contact to substrate. Serine 197 serves as a coordination point for phosphate. Substrate is bound at residue 220 to 222; that stretch reads DYD.

This sequence belongs to the PNP/MTAP phosphorylase family. MTAP subfamily. As to quaternary structure, homotrimer.

It localises to the cytoplasm. Its subcellular location is the nucleus. The enzyme catalyses S-methyl-5'-thioadenosine + phosphate = 5-(methylsulfanyl)-alpha-D-ribose 1-phosphate + adenine. It functions in the pathway amino-acid biosynthesis; L-methionine biosynthesis via salvage pathway; S-methyl-5-thio-alpha-D-ribose 1-phosphate from S-methyl-5'-thioadenosine (phosphorylase route): step 1/1. Its function is as follows. Catalyzes the reversible phosphorylation of S-methyl-5'-thioadenosine (MTA) to adenine and 5-methylthioribose-1-phosphate. Involved in the breakdown of MTA, a major by-product of polyamine biosynthesis. Responsible for the first step in the methionine salvage pathway after MTA has been generated from S-adenosylmethionine. Has broad substrate specificity with 6-aminopurine nucleosides as preferred substrates. This chain is S-methyl-5'-thioadenosine phosphorylase, found in Coprinopsis cinerea (strain Okayama-7 / 130 / ATCC MYA-4618 / FGSC 9003) (Inky cap fungus).